Here is a 293-residue protein sequence, read N- to C-terminus: Acetylglutamate kinase (293 aa).

Substrate-binding positions include 68–69 (GG), Arg90, and Asn189.

Belongs to the acetylglutamate kinase family. ArgB subfamily.

The protein resides in the cytoplasm. The enzyme catalyses N-acetyl-L-glutamate + ATP = N-acetyl-L-glutamyl 5-phosphate + ADP. Its pathway is amino-acid biosynthesis; L-arginine biosynthesis; N(2)-acetyl-L-ornithine from L-glutamate: step 2/4. Catalyzes the ATP-dependent phosphorylation of N-acetyl-L-glutamate. The chain is Acetylglutamate kinase from Mycolicibacterium smegmatis (strain ATCC 700084 / mc(2)155) (Mycobacterium smegmatis).